We begin with the raw amino-acid sequence, 681 residues long: Macrolide export ATP-binding/permease protein MacB (681 aa).

The region spanning 6-244 is the ABC transporter domain; sequence LKLAAVTRRF…FAEVGVGAAA (239 aa). ATP is bound at residue 42–49; it reads GASGSGKS. Positions 246–274 are disordered; sequence TETAADTRSAPASGDAPPPANNDTAADPA. Helical transmembrane passes span 306–326, 554–574, 611–631, and 644–664; these read LLTMLGIIIGITSVVSIVAVG, LTLLLSLIAVISLVVGGIGVM, LVCLLGGTIGIALSFGLGALF, and AGAIVTAFVCSTLTGVIFGFM.

It belongs to the ABC transporter superfamily. Macrolide exporter (TC 3.A.1.122) family. As to quaternary structure, homodimer.

Its subcellular location is the cell inner membrane. Its function is as follows. Non-canonical ABC transporter that contains transmembrane domains (TMD), which form a pore in the inner membrane, and an ATP-binding domain (NBD), which is responsible for energy generation. Confers resistance against macrolides. This is Macrolide export ATP-binding/permease protein MacB from Burkholderia cenocepacia (strain HI2424).